The following is a 700-amino-acid chain: Myb-related protein B (700 aa).

3 HTH myb-type domains span residues 26 to 77, 78 to 133, and 134 to 184; these read RDSK…LRVL, NPDL…NPEV, and KKSC…KRKV. The segment at residues 54 to 77 is a DNA-binding region (H-T-H motif); the sequence is WKFLASHFPNRTDQQCQYRWLRVL. Lysine 104 participates in a covalent cross-link: Glycyl lysine isopeptide (Lys-Gly) (interchain with G-Cter in SUMO2). 2 consecutive DNA-binding regions (H-T-H motif) follow at residues 106–129 and 157–180; these read WTLI…HNHL and WAEI…NSTI. Residues lysine 194 and lysine 197 each participate in a glycyl lysine isopeptide (Lys-Gly) (interchain with G-Cter in SUMO2) cross-link. 2 disordered regions span residues 212–287 and 391–412; these read LQSA…PETS and PISP…VLKR. Residues 213 to 229 show a composition bias toward polar residues; it reads QSAQPTEGQGSLLTNWP. Residue serine 241 is modified to Phosphoserine. Threonine 266 bears the Phosphothreonine mark. A Glycyl lysine isopeptide (Lys-Gly) (interchain with G-Cter in SUMO2) cross-link involves residue lysine 275. Phosphoserine occurs at positions 282 and 393. Lysine 411 is covalently cross-linked (Glycyl lysine isopeptide (Lys-Gly) (interchain with G-Cter in SUMO2)). The Nuclear localization signal signature appears at 411–417; sequence KRQRKRR. 2 positions are modified to phosphothreonine; by CDK2: threonine 440 and threonine 444. Residues lysine 447 and lysine 482 each participate in a glycyl lysine isopeptide (Lys-Gly) (interchain with G-Cter in SUMO2) cross-link. Phosphothreonine; by CDK2 occurs at positions 487 and 494. Lysine 499 is covalently cross-linked (Glycyl lysine isopeptide (Lys-Gly) (interchain with G-Cter in SUMO2)). Position 505 is a phosphothreonine (threonine 505). Residue lysine 509 forms a Glycyl lysine isopeptide (Lys-Gly) (interchain with G-Cter in SUMO2) linkage. Phosphothreonine; by CDK2 is present on threonine 520. Residues lysine 523, lysine 533, and lysine 546 each participate in a glycyl lysine isopeptide (Lys-Gly) (interchain with G-Cter in SUMO2) cross-link. Residues 564–584 carry the Bipartite nuclear localization signal motif; that stretch reads RPEKQKRKPGLRRSPIKKVRK. Serine 577 is subject to Phosphoserine; by CDK2. Glycyl lysine isopeptide (Lys-Gly) (interchain with G-Cter in SUMO2) cross-links involve residues lysine 584, lysine 596, lysine 625, lysine 639, and lysine 648.

As to quaternary structure, component of the DREAM complex (also named LINC complex) at least composed of E2F4, E2F5, LIN9, LIN37, LIN52, LIN54, MYBL1, MYBL2, RBL1, RBL2, RBBP4, TFDP1 and TFDP2. The complex exists in quiescent cells where it represses cell cycle-dependent genes. It dissociates in S phase when LIN9, LIN37, LIN52 and LIN54 form a subcomplex that binds to MYBL22. Interacts with CCNF (via the Cyclin N-terminal domain). Post-translationally, phosphorylated by cyclin A/CDK2 during S-phase. Phosphorylation at Thr-520 is probably involved in transcriptional activity.

It is found in the nucleus. Its function is as follows. Transcription factor involved in the regulation of cell survival, proliferation, and differentiation. Transactivates the expression of the CLU gene. The polypeptide is Myb-related protein B (MYBL2) (Homo sapiens (Human)).